The sequence spans 55 residues: Large ribosomal subunit protein bL33 (55 aa).

Belongs to the bacterial ribosomal protein bL33 family.

This is Large ribosomal subunit protein bL33 from Arthrobacter sp. (strain FB24).